The following is a 312-amino-acid chain: MTIKLKCLSHTPLRGLNDPGADVVAEVDAVLARSRAEVEAFDPELIVIFAPDHYNGLFYDLMPPFVIATAAESVADYGTLPGPLSIPRDLALDLTRHILDSGLDIALSHRLQVDHGCTQTLEELTGSLTRYPVIPIIINSVAPPFAPYRRIRKLGEAVGRFVASLGKRVLILGTGGLSHEPPVPLLSGAAEEIAEFLIAGRNPTPEARAARQARTIAAGKIYGTAESPLTPLNTDWDLAFIDLLVQGRLAEIDDFVVEEISTTAGRSTHEIRTWVAAFAALAAGGAYRARQDYYRPINEWIAGYGVVSAERR.

The active-site Proton donor is the H115. H179 acts as the Proton acceptor in catalysis.

Belongs to the LigB/MhpB extradiol dioxygenase family. As to quaternary structure, homotetramer. Fe(2+) is required as a cofactor.

It catalyses the reaction 3-(2,3-dihydroxyphenyl)propanoate + O2 = (2Z,4E)-2-hydroxy-6-oxonona-2,4-dienedioate + H(+). The catalysed reaction is (2E)-3-(2,3-dihydroxyphenyl)prop-2-enoate + O2 = (2Z,4E,7E)-2-hydroxy-6-oxonona-2,4,7-trienedioate + H(+). It participates in aromatic compound metabolism; 3-phenylpropanoate degradation. Catalyzes the non-heme iron(II)-dependent oxidative cleavage of 2,3-dihydroxyphenylpropionic acid and 2,3-dihydroxicinnamic acid into 2-hydroxy-6-ketononadienedioate and 2-hydroxy-6-ketononatrienedioate, respectively. The chain is 2,3-dihydroxyphenylpropionate/2,3-dihydroxicinnamic acid 1,2-dioxygenase from Azotobacter vinelandii (strain DJ / ATCC BAA-1303).